The chain runs to 407 residues: CCA-adding enzyme (407 aa).

ATP-binding residues include Gly32 and Arg35. Gly32 and Arg35 together coordinate CTP. Mg(2+)-binding residues include Asp45 and Asp47. ATP is bound by residues Arg116, Asp159, Arg162, Arg165, and Arg168. The CTP site is built by Arg116, Asp159, Arg162, Arg165, and Arg168.

This sequence belongs to the tRNA nucleotidyltransferase/poly(A) polymerase family. Bacterial CCA-adding enzyme type 3 subfamily. As to quaternary structure, homodimer. It depends on Mg(2+) as a cofactor.

The enzyme catalyses a tRNA precursor + 2 CTP + ATP = a tRNA with a 3' CCA end + 3 diphosphate. It carries out the reaction a tRNA with a 3' CCA end + 2 CTP + ATP = a tRNA with a 3' CCACCA end + 3 diphosphate. Functionally, catalyzes the addition and repair of the essential 3'-terminal CCA sequence in tRNAs without using a nucleic acid template. Adds these three nucleotides in the order of C, C, and A to the tRNA nucleotide-73, using CTP and ATP as substrates and producing inorganic pyrophosphate. tRNA 3'-terminal CCA addition is required both for tRNA processing and repair. Also involved in tRNA surveillance by mediating tandem CCA addition to generate a CCACCA at the 3' terminus of unstable tRNAs. While stable tRNAs receive only 3'-terminal CCA, unstable tRNAs are marked with CCACCA and rapidly degraded. The sequence is that of CCA-adding enzyme from Lactiplantibacillus plantarum (strain ATCC BAA-793 / NCIMB 8826 / WCFS1) (Lactobacillus plantarum).